Here is a 438-residue protein sequence, read N- to C-terminus: Adenylosuccinate synthetase (438 aa).

Residues 13-19 (GDEGKGK) and 41-43 (GHT) each bind GTP. Catalysis depends on D14, which acts as the Proton acceptor. Mg(2+)-binding residues include D14 and G41. IMP-binding positions include 14-17 (DEGK), 39-42 (NAGH), T130, R144, Q225, T240, and R310. H42 functions as the Proton donor in the catalytic mechanism. 306-312 (ATTGRLR) serves as a coordination point for substrate. Residues R312, 338–340 (KLD), and 421–423 (STG) each bind GTP.

The protein belongs to the adenylosuccinate synthetase family. As to quaternary structure, homodimer. Mg(2+) is required as a cofactor.

It is found in the cytoplasm. It carries out the reaction IMP + L-aspartate + GTP = N(6)-(1,2-dicarboxyethyl)-AMP + GDP + phosphate + 2 H(+). Its pathway is purine metabolism; AMP biosynthesis via de novo pathway; AMP from IMP: step 1/2. Functionally, plays an important role in the de novo pathway of purine nucleotide biosynthesis. Catalyzes the first committed step in the biosynthesis of AMP from IMP. This is Adenylosuccinate synthetase from Vibrio parahaemolyticus serotype O3:K6 (strain RIMD 2210633).